The chain runs to 379 residues: Alanine racemase (379 aa).

Lys37 (proton acceptor; specific for D-alanine) is an active-site residue. The residue at position 37 (Lys37) is an N6-(pyridoxal phosphate)lysine. Position 137 (Arg137) interacts with substrate. The active-site Proton acceptor; specific for L-alanine is Tyr269. A substrate-binding site is contributed by Met317.

It belongs to the alanine racemase family. It depends on pyridoxal 5'-phosphate as a cofactor.

The enzyme catalyses L-alanine = D-alanine. Its pathway is amino-acid biosynthesis; D-alanine biosynthesis; D-alanine from L-alanine: step 1/1. Its function is as follows. Catalyzes the interconversion of L-alanine and D-alanine. May also act on other amino acids. This Geobacter sp. (strain M21) protein is Alanine racemase (alr).